The chain runs to 193 residues: Interleukin-18 (193 aa).

Residues M1 to D36 constitute a propeptide that is removed on maturation.

The protein belongs to the IL-1 family. In terms of assembly, forms a ternary complex with ligand-binding receptor subunit IL18R1 and signaling receptor subunit IL18RAP at the plasma membrane. Mature IL18 first binds to IL18R1 forming a low affinity binary complex, which then interacts with IL18RAP to form a high affinity ternary complex that signals inside the cell. Interacts with cargo receptor TMED10; the interaction mediates the translocation from the cytoplasm into the ERGIC (endoplasmic reticulum-Golgi intermediate compartment) and thereby secretion. In terms of processing, the pro-IL-18 precursor is processed by CASP1, CASP4 or CASP5 to yield its mature, active form. The pro-IL-18 precursor features autoinhibitory interactions between the propeptide and the post-cleavage-site region, preventing recognition by the IL18R1 receptor. Processing by CASP1, CASP4 or CASP5 induces conformational changes to generate critical receptor-binding sites. The mature form is then secreted and released in the extracellular milieu by passing through the gasdermin-D (GSDMD) pore. In contrast, cleavage by CASP3 inactivates IL18.

Its subcellular location is the cytoplasm. The protein localises to the cytosol. It is found in the secreted. Its function is as follows. Pro-inflammatory cytokine primarily involved in epithelial barrier repair, polarized T-helper 1 (Th1) cell and natural killer (NK) cell immune responses. Upon binding to IL18R1 and IL18RAP, forms a signaling ternary complex which activates NF-kappa-B, triggering synthesis of inflammatory mediators. Synergizes with IL12/interleukin-12 to induce IFNG synthesis from T-helper 1 (Th1) cells and natural killer (NK) cells. Involved in transduction of inflammation downstream of pyroptosis: its mature form is specifically released in the extracellular milieu by passing through the gasdermin-D (GSDMD) pore. This chain is Interleukin-18 (IL18), found in Canis lupus familiaris (Dog).